The primary structure comprises 170 residues: MHITTKRLLIREFEFKDWQAVYEYTSDSNVMKYIPEGVFTEEDAKAFVNKNKGDNAEKFPVILRDEDCLIGHIVFYKYFGEHTYEIGWVFNPNYQNKGYASEAAQAILEYGFKEMNLHRIIATCQPENIPSYRVMKKIGMRREGFFKKCIPKGNEWWDEYYYAILEEEWN.

Positions 8–167 (LLIREFEFKD…DEYYYAILEE (160 aa)) constitute an N-acetyltransferase domain.

It belongs to the acetyltransferase family.

This is an uncharacterized protein from Bacillus subtilis (strain 168).